A 291-amino-acid polypeptide reads, in one-letter code: Protease HtpX (291 aa).

The next 2 helical transmembrane spans lie at 4–24 and 36–56; these read IALF…VLNI and LSGL…ISLM. Residue histidine 143 coordinates Zn(2+). Residue glutamate 144 is part of the active site. Histidine 147 is a binding site for Zn(2+). A run of 2 helical transmembrane segments spans residues 151 to 171 and 199 to 219; these read GDMI…IFLS and FIVS…LTMW. Glutamate 225 is a binding site for Zn(2+).

This sequence belongs to the peptidase M48B family. Requires Zn(2+) as cofactor.

The protein resides in the cell inner membrane. In Aliivibrio fischeri (strain MJ11) (Vibrio fischeri), this protein is Protease HtpX.